Consider the following 65-residue polypeptide: NADH dehydrogenase [ubiquinone] 1 alpha subcomplex subunit 1 (65 aa).

The helical transmembrane segment at Leu3–Gly23 threads the bilayer.

This sequence belongs to the complex I NDUFA1 subunit family. In terms of assembly, complex I is composed of at least 49 different subunits.

The protein resides in the mitochondrion inner membrane. In terms of biological role, accessory subunit of the mitochondrial membrane respiratory chain NADH dehydrogenase (Complex I), that is believed not to be involved in catalysis. Complex I functions in the transfer of electrons from NADH to the respiratory chain. The immediate electron acceptor for the enzyme is believed to be ubiquinone. The polypeptide is NADH dehydrogenase [ubiquinone] 1 alpha subcomplex subunit 1 (Arabidopsis thaliana (Mouse-ear cress)).